A 606-amino-acid polypeptide reads, in one-letter code: UvrABC system protein C (606 aa).

Residues 19-97 form the GIY-YIG domain; the sequence is QSCGVYQMIG…IKSLKPPYNI (79 aa). Residues 207–242 form the UVR domain; sequence EKVKKQLSSTMEKCSKEENYELAAIYRDRLKFLEQI.

Belongs to the UvrC family. As to quaternary structure, interacts with UvrB in an incision complex.

It localises to the cytoplasm. In terms of biological role, the UvrABC repair system catalyzes the recognition and processing of DNA lesions. UvrC both incises the 5' and 3' sides of the lesion. The N-terminal half is responsible for the 3' incision and the C-terminal half is responsible for the 5' incision. The polypeptide is UvrABC system protein C (Wolbachia sp. subsp. Brugia malayi (strain TRS)).